Consider the following 323-residue polypeptide: Conjugal transfer protein TrbB (323 aa).

151–158 (GGTGSGKT) serves as a coordination point for ATP.

Belongs to the GSP E family.

The protein resides in the cytoplasm. This is Conjugal transfer protein TrbB (trbB) from Rhizobium radiobacter (Agrobacterium tumefaciens).